Consider the following 92-residue polypeptide: Small ribosomal subunit protein uS19 (92 aa).

Belongs to the universal ribosomal protein uS19 family.

Functionally, protein S19 forms a complex with S13 that binds strongly to the 16S ribosomal RNA. In Picosynechococcus sp. (strain ATCC 27264 / PCC 7002 / PR-6) (Agmenellum quadruplicatum), this protein is Small ribosomal subunit protein uS19.